An 874-amino-acid polypeptide reads, in one-letter code: MKTTSEIRQSFLDFFHSKGHTVVPSSSLVPENDPTLLFTNAGMNQFKDVFLGLEKRPYTRATTAQRCVRAGGKHNDLENVGYTARHHTFFEMMGNFSFGDYFKHDAIQFGWEYLTSPQWLGLPKEKLYVTVYETDDEAYDIWNKIVGVPTDHIIRIGDNKGAPYASDNFWAMGDTGPCGPCTEIFYDHGETFWGGLPGSPEEDGDRYIEVWNIVFMQFNRLADGTMEKLPKPSVDTGMGLERMTAVMQHVNSNYETDIFQTLIKEVAGLLNVSDLDNKSLRVVADHIRACSYLIADGVVPSNEGRGYVLRRIIRRAVRHGNLLGAKEAFFYKLVPTLATVMGHAGEVLTQKQAHIQKTLKAEEEQFARTLERGLALLEDALTKVENNTLSGEVAFKLYDTYGFPLDLTADVCRERELTIDEAGFEAEMTAQRERAKASSNFGTDYNNVIKVEGQTDFIGYDNLEAQATIVGLFSNGKAVDTIQSGESAVIILDQTSFYAEMGGQVGDSGLISTEICNFAVNDTQKYGQVFGHIGQLTSGSLSIGDKVTATVHATRRIAITANHSATHLLHSALREVLGDHVAQKGSLVSENILRFDFSQPEAISKSQLEEIERIVNRKIRENIQVTIETMDIESAKKKGAMALFGEKYGDVVRVVGMTEFSIELCGGTHVQRTGDIGLFKLVSEGAVAAGIRRVEAVTAETAIEWLHNQQKVLQQSAEFLKADSNSLVEKIQQLQDKAKRTEKELQQLKDKLAAQAGSELVKQANKINGVNVVVQKLENVEVKSLRTMVDDLKNQLESAIVVFGTVADEKVNLIVGVTKDLSSKVNAGELVGAMAQQVGGKGGGRADMAMAGGSEPQNLDNALKFAEEWIQAKL.

Zn(2+)-binding residues include H563, H567, C665, and H669.

This sequence belongs to the class-II aminoacyl-tRNA synthetase family. Requires Zn(2+) as cofactor.

Its subcellular location is the cytoplasm. The enzyme catalyses tRNA(Ala) + L-alanine + ATP = L-alanyl-tRNA(Ala) + AMP + diphosphate. Catalyzes the attachment of alanine to tRNA(Ala) in a two-step reaction: alanine is first activated by ATP to form Ala-AMP and then transferred to the acceptor end of tRNA(Ala). Also edits incorrectly charged Ser-tRNA(Ala) and Gly-tRNA(Ala) via its editing domain. The polypeptide is Alanine--tRNA ligase (Actinobacillus pleuropneumoniae serotype 5b (strain L20)).